The sequence spans 270 residues: Bis(5'-nucleosyl)-tetraphosphatase, symmetrical (270 aa).

The protein belongs to the Ap4A hydrolase family.

The catalysed reaction is P(1),P(4)-bis(5'-adenosyl) tetraphosphate + H2O = 2 ADP + 2 H(+). Hydrolyzes diadenosine 5',5'''-P1,P4-tetraphosphate to yield ADP. This Actinobacillus pleuropneumoniae serotype 5b (strain L20) protein is Bis(5'-nucleosyl)-tetraphosphatase, symmetrical.